Here is a 341-residue protein sequence, read N- to C-terminus: DNA repair protein XRCC3 (341 aa).

N-acetylmethionine is present on methionine 1. 107 to 114 (GRSSAGKT) serves as a coordination point for ATP.

Belongs to the RecA family. RAD51 subfamily. In terms of assembly, interacts with RAD51C and RAD51. Part of the CX3 complex consisting of RAD51C and XRCC3; the complex has a ring-like structure arranged into a flat disc around a central channel; CX3 can interact with RAD51 in vitro. Forms a complex with FANCD2, BRCA2 and phosphorylated FANCG. Interacts with SWSAP1 and ZSWIM7; involved in homologous recombination repair. Interacts directly with PALB2 which may serve as a scaffold for a HR complex containing PALB2, BRCA2, RAD51C, RAD51 and XRCC3.

The protein localises to the nucleus. The protein resides in the cytoplasm. It localises to the perinuclear region. Its subcellular location is the mitochondrion matrix. Functionally, involved in the homologous recombination repair (HRR) pathway of double-stranded DNA, thought to repair chromosomal fragmentation, translocations and deletions. Part of the RAD21 paralog protein complex CX3 which acts in the BRCA1-BRCA2-dependent HR pathway. Upon DNA damage, CX3 acts downstream of RAD51 recruitment; the complex binds predominantly to the intersection of the four duplex arms of the Holliday junction (HJ) and to junctions of replication forks. Involved in HJ resolution and thus in processing HR intermediates late in the DNA repair process; the function may be linked to the CX3 complex and seems to involve GEN1 during mitotic cell cycle progression. Part of a PALB2-scaffolded HR complex containing BRCA2 and RAD51C and which is thought to play a role in DNA repair by HR. Plays a role in regulating mitochondrial DNA copy number under conditions of oxidative stress in the presence of RAD51 and RAD51C. In Bos taurus (Bovine), this protein is DNA repair protein XRCC3 (XRCC3).